The chain runs to 395 residues: THP3 homolog C2A9.11c (395 aa).

Residues 91–127 (LLSEEDEVDKKEKRRRRFENGSRSQNNAKSEELKVNP) are disordered. A PCI domain is found at 218-384 (DVGEYNQCQT…STDRFEKCMK (167 aa)).

It belongs to the THP3 family.

The protein resides in the cytoplasm. It localises to the nucleus. In terms of biological role, required for transcription elongation. May also be involved in pre-mRNA splicing. This Schizosaccharomyces pombe (strain 972 / ATCC 24843) (Fission yeast) protein is THP3 homolog C2A9.11c.